The chain runs to 476 residues: Fatty acid hydroperoxide lyase, chloroplastic (476 aa).

Residues 280–300 traverse the membrane as a helical segment; that stretch reads LLFILGFNAFGGFSIFLPTLL. Cys438 provides a ligand contact to heme.

The protein belongs to the cytochrome P450 family. It depends on heme as a cofactor. Highly expressed in developing flowers and in young leaves. Detected in stems and immature green fruits, but not in mature green and red fruits.

It is found in the plastid. The protein resides in the chloroplast outer membrane. Its activity is regulated as follows. Reversibly inhibited by nordihydroguaiaretic acid (NDGA) and irreversibly by salicylic acid. Cytochrome P450 of the CYP74B subfamily involved in the biosynthesis of traumatin and C6 aldehydes. Metabolizes 13- but not 9-hydroperoxides of linoleic and linolenic acids. Can use 15S-hydroperoxy-11(Z),13(E),17(Z)-eicosatrienoic acid (15-HPET) and 13S-hydroperoxy-9(Z),11(E),15(Z)-octadecatrienoic acid (13-HPOT) as substrates, but only 5% activity with 13S-hydroperoxy-9(Z),11(E)-octadecadienoic acid (13-HPOD). Produces n-hexanal and 12-oxo-9(Z)-dodecanoic acid from 13-HPOD. This is Fatty acid hydroperoxide lyase, chloroplastic from Solanum lycopersicum (Tomato).